The following is a 139-amino-acid chain: U6 snRNA-associated Sm-like protein LSm4 (139 aa).

The residue at position 1 (M1) is an N-acetylmethionine. One can recognise a Sm domain in the interval 2–75 (LPLSLLKTAQ…IKYLRIPDEI (74 aa)). K80 is covalently cross-linked (Glycyl lysine isopeptide (Lys-Gly) (interchain with G-Cter in SUMO2)). Residues 87-139 (GRGRGGLQQQKQQKGRGMGGAGRGVFGGRGRGGIPGTGRGQPEKKPGRQAGKQ) are disordered. A compositionally biased stretch (gly residues) spans 102-125 (RGMGGAGRGVFGGRGRGGIPGTGR).

Belongs to the snRNP Sm proteins family. As to quaternary structure, component of the precatalytic spliceosome (spliceosome B complex). Component of the U4/U6-U5 tri-snRNP complex, a building block of the precatalytic spliceosome (spliceosome B complex). The U4/U6-U5 tri-snRNP complex is composed of the U4, U6 and U5 snRNAs and at least PRPF3, PRPF4, PRPF6, PRPF8, PRPF31, SNRNP200, TXNL4A, SNRNP40, SNRPB, SNRPD1, SNRPD2, SNRPD3, SNRPE, SNRPF, SNRPG, DDX23, CD2BP2, PPIH, SNU13, EFTUD2, SART1 and USP39, plus LSM2, LSM3, LSM4, LSM5, LSM6, LSM7 and LSM8. LSM2, LSM3, LSM4, LSM5, LSM6, LSM7 and LSM8 form a heptameric, ring-shaped subcomplex (the LSM2-8 complex) that is part of the U4/U6-U5 tri-snRNP complex and the precatalytic spliceosome.

The protein resides in the nucleus. Plays a role in pre-mRNA splicing as component of the U4/U6-U5 tri-snRNP complex that is involved in spliceosome assembly, and as component of the precatalytic spliceosome (spliceosome B complex). The heptameric LSM2-8 complex binds specifically to the 3'-terminal U-tract of U6 snRNA. The protein is U6 snRNA-associated Sm-like protein LSm4 (LSM4) of Bos taurus (Bovine).